Reading from the N-terminus, the 294-residue chain is Cytidine deaminase (294 aa).

2 consecutive CMP/dCMP-type deaminase domains span residues 49-169 (TPQQ…FGPA) and 188-294 (ETQD…YIAL). 90 to 92 (NLE) is a binding site for substrate. Residue histidine 103 coordinates Zn(2+). The active-site Proton donor is glutamate 105. Zn(2+) is bound by residues cysteine 130 and cysteine 133.

It belongs to the cytidine and deoxycytidylate deaminase family. As to quaternary structure, homodimer. Zn(2+) serves as cofactor.

The catalysed reaction is cytidine + H2O + H(+) = uridine + NH4(+). It carries out the reaction 2'-deoxycytidine + H2O + H(+) = 2'-deoxyuridine + NH4(+). This enzyme scavenges exogenous and endogenous cytidine and 2'-deoxycytidine for UMP synthesis. The protein is Cytidine deaminase of Pasteurella multocida (strain Pm70).